We begin with the raw amino-acid sequence, 434 residues long: Forkhead box protein A2 (434 aa).

The fork-head DNA-binding region spans 149 to 243; that stretch reads KPPYSYISLI…ENGCYLRRQK (95 aa). The span at 249-262 shows a compositional bias: basic and acidic residues; sequence KKPSLREGGGKKLS. A disordered region spans residues 249–339; that stretch reads KKPSLREGGG…VLSHEAQSHL (91 aa). Composition is skewed to low complexity over residues 263-291 and 317-333; these read EGSSSVGSAANSSSESSVGNESPHSSSSP and ASQAQHLLSQHHSVLSH.

Its subcellular location is the nucleus. Acts as a transcriptional activator during early development, limiting the extent of mesoderm formation in the gastrula. Binds to DNA via the target sequence 5'-GT[AC]AACA-3', with 5'-GTAAACA-3' being the preferred binding site. This Xenopus tropicalis (Western clawed frog) protein is Forkhead box protein A2.